We begin with the raw amino-acid sequence, 391 residues long: uncharacterized protein (391 aa).

The HTH arsR-type domain occupies 235–330 (VFILSRINLL…LYLKNETQKS (96 aa)).

This is an uncharacterized protein from Methanocaldococcus jannaschii (strain ATCC 43067 / DSM 2661 / JAL-1 / JCM 10045 / NBRC 100440) (Methanococcus jannaschii).